Reading from the N-terminus, the 419-residue chain is Tyrosine--tRNA ligase (419 aa).

Residue tyrosine 34 participates in L-tyrosine binding. The short motif at proline 39 to histidine 48 is the 'HIGH' region element. 2 residues coordinate L-tyrosine: tyrosine 168 and glutamine 172. A 'KMSKS' region motif is present at residues lysine 230–serine 234. Lysine 233 contacts ATP. An S4 RNA-binding domain is found at valine 352–tyrosine 418.

The protein belongs to the class-I aminoacyl-tRNA synthetase family. TyrS type 1 subfamily. In terms of assembly, homodimer.

Its subcellular location is the cytoplasm. The catalysed reaction is tRNA(Tyr) + L-tyrosine + ATP = L-tyrosyl-tRNA(Tyr) + AMP + diphosphate + H(+). Its function is as follows. Catalyzes the attachment of tyrosine to tRNA(Tyr) in a two-step reaction: tyrosine is first activated by ATP to form Tyr-AMP and then transferred to the acceptor end of tRNA(Tyr). The chain is Tyrosine--tRNA ligase from Listeria innocua serovar 6a (strain ATCC BAA-680 / CLIP 11262).